We begin with the raw amino-acid sequence, 264 residues long: Short-chain dehydrogenase/reductase ucsE (264 aa).

A helical membrane pass occupies residues 13-32; it reads LVVVVGGTSGLGFAVAQAAV. 3 residues coordinate NADP(+): Leu23, Ser43, and Asp74. Asn125 carries an N-linked (GlcNAc...) asparagine glycan. NADP(+) is bound by residues Arg130 and Lys139. The active-site Proton donor is Ser157. Val202 and Thr204 together coordinate NADP(+).

This sequence belongs to the short-chain dehydrogenases/reductases (SDR) family. NADP(+) serves as cofactor.

The protein localises to the membrane. The protein operates within mycotoxin biosynthesis. Functionally, short-chain dehydrogenase/reductase; part of the gene cluster that mediates the biosynthesis of UCS1025A, a member of the pyrrolizidinone family that acts as a strong telomerase inhibitor and displays potent antibacterial and antitumor properties. These compounds share a hemiaminal-containing pyrrolizidinone core fused with a gamma-lactone, giving a furopyrrolizidine that is connected to a decalin fragment. The polyketide synthase module (PKS) of the PKS-NRPS ucsA is responsible for the synthesis of the polyketide backbone via the condensation of an acetyl-CoA starter unit with 6 malonyl-CoA units. The downstream nonribosomal peptide synthetase (NRPS) module then amidates the carboxyl end of the polyketide with a 2S,3S-methylproline derived from L-isoleucine by the 2-oxoglutarate-dependent dioxygenase ucsF which converts L-isoleucine to (4S,5S)-4-methylpyrroline-5-carboxylate that is further converted to 2S,3S-methylproline by the pyrroline-5-carboxylate reductase ucsG. Reductive release of the completed aminoacyl polyketide from the assembly line can form the 3-pyrrolin-2-one structure via an intramolecular Knoevenagel reaction. Because ucsA lacks a designated enoylreductase (ER) domain, the required activity is provided the enoyl reductase ucsL. This keto acyclic precursor is the substrate of the Diels-Alderase ucsH, that catalyzes the Diels-Alder cycloaddition. Oxidation of the 3S-methyl group to a carboxylate by the cytochrome P450 monooxygenase ucsK allows an oxa-Michael cyclization that might involve the reductase/dehydrogenase ucsI and which furnishes the furopyrrolizidine. The oxidase ucsJ likely plays a critical role in stereoselective reduction of the C5-C6 double bond to afford the required R-configured carboxylate group. Further enolization and oxidation at C5 by an unidentified enzyme affords the last intermediate that can undergo oxa-Michael cyclization to yield UCS1025A. In Acremonium sp, this protein is Short-chain dehydrogenase/reductase ucsE.